The primary structure comprises 308 residues: Cell division protein FtsQ (308 aa).

The interval 1–28 (MQSLSFPPNRRTPRLAPPRRETGRRDPA) is disordered. Over 1–46 (MQSLSFPPNRRTPRLAPPRRETGRRDPAPSRWAYRAQRLWLTPMFR) the chain is Cytoplasmic. Positions 18–28 (PRRETGRRDPA) are enriched in basic and acidic residues. The helical transmembrane segment at 47 to 67 (TALRVGLPIVGVLLVVALIFA) threads the bilayer. Residues 68–308 (SADRRAAMAG…RGIDTSGSDL (241 aa)) are Periplasmic-facing. In terms of domain architecture, POTRA spans 92-160 (FMVTLLSVDG…GLLEVRVTER (69 aa)).

Belongs to the FtsQ/DivIB family. FtsQ subfamily.

It localises to the cell inner membrane. Its function is as follows. Essential cell division protein. The chain is Cell division protein FtsQ from Cereibacter sphaeroides (strain ATCC 17023 / DSM 158 / JCM 6121 / CCUG 31486 / LMG 2827 / NBRC 12203 / NCIMB 8253 / ATH 2.4.1.) (Rhodobacter sphaeroides).